A 260-amino-acid chain; its full sequence is 3'-5' ssDNA/RNA exonuclease TatD (260 aa).

The a divalent metal cation site is built by glutamate 91, histidine 127, and histidine 152.

It belongs to the metallo-dependent hydrolases superfamily. TatD-type hydrolase family. TatD subfamily. In terms of assembly, monomer. The cofactor is Mg(2+).

Its subcellular location is the cytoplasm. Functionally, 3'-5' exonuclease that prefers single-stranded DNA and RNA. May play a role in the H(2)O(2)-induced DNA damage repair. The sequence is that of 3'-5' ssDNA/RNA exonuclease TatD from Enterobacter lignolyticus (strain SCF1).